The following is a 203-amino-acid chain: Recombination protein RecR (203 aa).

The segment at 56-71 (CTVCGNVSDDERCRIC) adopts a C4-type zinc-finger fold. In terms of domain architecture, Toprim spans 79–179 (SVVCVVEEPK…TVTRIASGLP (101 aa)).

It belongs to the RecR family.

In terms of biological role, may play a role in DNA repair. It seems to be involved in an RecBC-independent recombinational process of DNA repair. It may act with RecF and RecO. The sequence is that of Recombination protein RecR from Mycobacterium leprae (strain TN).